The primary structure comprises 196 residues: ATP-dependent Clp protease proteolytic subunit (196 aa).

Residue Ser99 is the Nucleophile of the active site. His124 is a catalytic residue.

This sequence belongs to the peptidase S14 family. In terms of assembly, fourteen ClpP subunits assemble into 2 heptameric rings which stack back to back to give a disk-like structure with a central cavity, resembling the structure of eukaryotic proteasomes.

It is found in the cytoplasm. It carries out the reaction Hydrolysis of proteins to small peptides in the presence of ATP and magnesium. alpha-casein is the usual test substrate. In the absence of ATP, only oligopeptides shorter than five residues are hydrolyzed (such as succinyl-Leu-Tyr-|-NHMec, and Leu-Tyr-Leu-|-Tyr-Trp, in which cleavage of the -Tyr-|-Leu- and -Tyr-|-Trp bonds also occurs).. In terms of biological role, cleaves peptides in various proteins in a process that requires ATP hydrolysis. Has a chymotrypsin-like activity. Plays a major role in the degradation of misfolded proteins. The protein is ATP-dependent Clp protease proteolytic subunit of Nitratiruptor sp. (strain SB155-2).